The following is an 879-amino-acid chain: Metabotropic glutamate receptor 3 (879 aa).

The signal sequence occupies residues 1–24 (MKMLTRLQVLTLALFSKGFLLSLG). Topologically, residues 25 to 577 (DHNFLRREIK…DYIRWEDAWA (553 aa)) are extracellular. An intrachain disulfide couples Cys57 to Cys99. L-glutamate is bound by residues Ser151 and 172–174 (AST). An N-linked (GlcNAc...) asparagine glycan is attached at Asn209. Tyr222 lines the L-glutamate pocket. 7 disulfide bridges follow: Cys240–Cys527, Cys361–Cys373, Cys412–Cys419, Cys509–Cys528, Cys513–Cys531, Cys534–Cys546, and Cys549–Cys562. Asn292 carries N-linked (GlcNAc...) asparagine glycosylation. L-glutamate is bound at residue Asp301. Lys389 contacts L-glutamate. N-linked (GlcNAc...) asparagine glycosylation is found at Asn414 and Asn439. A helical membrane pass occupies residues 578-598 (IGPVTIACLGFMCTCMVITVF). Topologically, residues 599 to 613 (IKHNNTPLVKASGRE) are cytoplasmic. A helical membrane pass occupies residues 614 to 634 (LCYILLFGVGLSYCMTFFFIA). The Extracellular portion of the chain corresponds to 635–688 (KPSPVICALRRLGLGSSFAICYSALLTKTNCIARIFDGVKNGAQRPKFISPSSQ). A helical transmembrane segment spans residues 689–709 (VFICLGLILVQIVMVSVWLIL). Topologically, residues 710 to 735 (EAPGTRRYTLAEKRETVILKCNVKDS) are cytoplasmic. The chain crosses the membrane as a helical span at residues 736-756 (SMLISLTYDVILVILCTVYAF). Over 757 to 769 (KTRKCPENFNEAK) the chain is Extracellular. A helical transmembrane segment spans residues 770–790 (FIGFTMYTTCIIWLAFLPIFY). The Cytoplasmic segment spans residues 791–807 (VTSSDYRVQTTTMCISV). The chain crosses the membrane as a helical span at residues 808-828 (SLSGFVVLGCLFAPKVHIILF). The Extracellular segment spans residues 829 to 879 (QPQKNVVTHRLHLNRFSVSGTGTTYSQSSASMYVPTVCNGREVLDSTTSSL).

Belongs to the G-protein coupled receptor 3 family. Interacts with TAMALIN.

It is found in the cell membrane. In terms of biological role, G-protein coupled receptor for glutamate. Ligand binding causes a conformation change that triggers signaling via guanine nucleotide-binding proteins (G proteins) and modulates the activity of down-stream effectors. Signaling inhibits adenylate cyclase activity. This chain is Metabotropic glutamate receptor 3 (GRM3), found in Macaca fascicularis (Crab-eating macaque).